The sequence spans 88 residues: LYR motif-containing protein 2 (88 aa).

Residues 1–19 (MAASRLPPATLTLKQFMRR) constitute a mitochondrion transit peptide.

It belongs to the complex I LYR family.

It is found in the mitochondrion. Involved in efficient integration of the N-module into mitochondrial respiratory chain complex I. This is LYR motif-containing protein 2 (Lyrm2) from Rattus norvegicus (Rat).